Consider the following 293-residue polypeptide: Cell division protein FtsQ (293 aa).

Over 1–27 the chain is Cytoplasmic; sequence MRPLMRNRASERGVDPAPSRWAWRMQR. A helical membrane pass occupies residues 28-48; it reads LLLTPAFLLFLRAGVPVLVLF. At 49–293 the chain is on the periplasmic side; the sequence is GAATWWLSDT…WWEIRQVSRQ (245 aa). The POTRA domain occupies 81-149; it reads FMVQLMAVDG…GVLHIDVEPR (69 aa).

The protein belongs to the FtsQ/DivIB family. FtsQ subfamily.

It localises to the cell inner membrane. Its function is as follows. Essential cell division protein. In Roseobacter litoralis (strain ATCC 49566 / DSM 6996 / JCM 21268 / NBRC 15278 / OCh 149), this protein is Cell division protein FtsQ.